A 272-amino-acid chain; its full sequence is GPN-loop GTPase 3 (272 aa).

13-18 (GAGKST) is a GTP binding site. Positions 70–72 (GPN) match the Gly-Pro-Asn (GPN)-loop; involved in dimer interface motif. Residue 173–176 (SKLD) participates in GTP binding.

This sequence belongs to the GPN-loop GTPase family. Heterodimers with NPA3/GPN1 or GPN2. Binds to RNA polymerase II (RNAPII).

Small GTPase required for proper nuclear localization of RNA polymerase II and III (RNAPII and RNAPIII). May act at an RNAP assembly step prior to nuclear import. Promotes sister chromatid separation during anaphase. This is GPN-loop GTPase 3 from Saccharomyces cerevisiae (strain ATCC 204508 / S288c) (Baker's yeast).